Reading from the N-terminus, the 410-residue chain is Elongation factor Tu, chloroplastic (410 aa).

Positions 10–214 constitute a tr-type G domain; it reads KPHINIGTIG…QVDKYIPTPQ (205 aa). The tract at residues 19–26 is G1; that stretch reads GHVDHGKT. 19–26 provides a ligand contact to GTP; the sequence is GHVDHGKT. Residue T26 participates in Mg(2+) binding. Residues 60 to 64 form a G2 region; that stretch reads GITIN. Positions 81-84 are G3; the sequence is DCPG. Residues 81 to 85 and 136 to 139 contribute to the GTP site; these read DCPGH and NKED. Residues 136 to 139 form a G4 region; that stretch reads NKED. The tract at residues 174–176 is G5; sequence SAL.

Belongs to the TRAFAC class translation factor GTPase superfamily. Classic translation factor GTPase family. EF-Tu/EF-1A subfamily.

The protein localises to the plastid. It is found in the chloroplast. The enzyme catalyses GTP + H2O = GDP + phosphate + H(+). Functionally, GTP hydrolase that promotes the GTP-dependent binding of aminoacyl-tRNA to the A-site of ribosomes during protein biosynthesis. The protein is Elongation factor Tu, chloroplastic (tufA) of Mesostigma viride (Green alga).